We begin with the raw amino-acid sequence, 125 residues long: U11-myrmicitoxin-Ta1a (125 aa).

An N-terminal signal peptide occupies residues 1–21 (MKTVIFILGFAFVAILIPTNG). Positions 22–91 (ESMADADAMA…RAMAAAYAAA (70 aa)) are excised as a propeptide. A disulfide bond links C101 and C124.

Belongs to the formicidae venom precursor-01 superfamily. Expressed by the venom gland.

The protein resides in the secreted. The protein localises to the target cell membrane. In terms of biological role, neurotoxin that causes irreversible rapid flaccid paralysis in blowflies and honeybees upon intrathoracic injection. Causes a quick and irreversible cytolytic effect (at 10 uM) indicating it possibly acts as a pore-forming peptide. Shows only weak effect on aphids (A.pisum) at high doses 24 hours post intrathoracic injection. In vitro, is not cytotoxic on the dipteran S2 Drosophila embryonic cell line. The polypeptide is U11-myrmicitoxin-Ta1a (Tetramorium africanum (Fierce ant)).